The following is a 471-amino-acid chain: Ribonuclease 3 (471 aa).

Residues 1 to 10 (MGSKVAGKKK) show a composition bias toward basic residues. Disordered stretches follow at residues 1–29 (MGSKVAGKKKTQNDNKLDNENGSQQRENI) and 168–189 (NLNEKEDEEEDEGEDSYDPTKA). Polar residues predominate over residues 20-29 (ENGSQQRENI). The span at 172–184 (KEDEEEDEGEDSY) shows a compositional bias: acidic residues. Positions 227-331 (LSGSEMINAH…YIGGLMEDDP (105 aa)) constitute an RNase III domain. The DRBM domain maps to 369–437 (NAKRQLYSLI…AENALRDKKM (69 aa)). The interval 451–471 (SESVLKDPSQKNKKRKFSDTS) is disordered. Positions 461–471 (KNKKRKFSDTS) are enriched in basic residues.

The enzyme catalyses Endonucleolytic cleavage to 5'-phosphomonoester.. Its function is as follows. DsRNA-specific nuclease that cleaves eukaryotic pre-ribosomal RNA at the U3 snoRNP-dependent A0 site in the 5'-external transcribed spacer (ETS) and in the 3'-ETS. In vitro, cleaves synthetic 5'-ETS RNA A0 site in the absence of snoRNA or other factors. Has an essential growth function in addition to pre-rRNA processing. This chain is Ribonuclease 3 (RNT1), found in Saccharomyces cerevisiae (strain ATCC 204508 / S288c) (Baker's yeast).